The following is a 797-amino-acid chain: LPS-assembly protein LptD (797 aa).

Residues 1 to 30 (MKEGRKRLRAGYCYMLAGVVGVASTGSSRA) form the signal peptide.

It belongs to the LptD family. In terms of assembly, component of the lipopolysaccharide transport and assembly complex. Interacts with LptE and LptA.

It localises to the cell outer membrane. Together with LptE, is involved in the assembly of lipopolysaccharide (LPS) at the surface of the outer membrane. This Hahella chejuensis (strain KCTC 2396) protein is LPS-assembly protein LptD.